A 79-amino-acid chain; its full sequence is Large ribosomal subunit protein uL29 (79 aa).

This sequence belongs to the universal ribosomal protein uL29 family.

The sequence is that of Large ribosomal subunit protein uL29 from Tropheryma whipplei (strain Twist) (Whipple's bacillus).